The sequence spans 267 residues: Neural/ectodermal development factor IMP-L2 (267 aa).

The first 25 residues, 1–25 (MEAKMNLHVCALALLLFGSIATVRG), serve as a signal peptide directing secretion. Ig-like C2-type domains follow at residues 48-149 (PRNR…KTIY) and 174-260 (PRII…TFVY). Intrachain disulfides connect cysteine 80/cysteine 139 and cysteine 195/cysteine 244.

As to expression, detected in several sites including the ventral neuroectoderm, the tracheal pits, the pharynx and esophagus, and specific neuronal cell bodies, where it is primarily expressed.

The protein localises to the secreted. Its subcellular location is the extracellular space. Functionally, essential developmental role during embryogenesis, in particular the normal development of the nervous system. May be involved in some aspect of cell adhesion. The protein is Neural/ectodermal development factor IMP-L2 (ImpL2) of Drosophila melanogaster (Fruit fly).